The primary structure comprises 327 residues: GMP reductase (327 aa).

Residue Cys175 is the Thioimidate intermediate of the active site. 204 to 227 lines the NADP(+) pocket; sequence IIADGGIRTNGDVAKSIRFGATMV.

It belongs to the IMPDH/GMPR family. GuaC type 2 subfamily.

The catalysed reaction is IMP + NH4(+) + NADP(+) = GMP + NADPH + 2 H(+). Catalyzes the irreversible NADPH-dependent deamination of GMP to IMP. It functions in the conversion of nucleobase, nucleoside and nucleotide derivatives of G to A nucleotides, and in maintaining the intracellular balance of A and G nucleotides. The protein is GMP reductase of Bacillus cereus (strain ZK / E33L).